Reading from the N-terminus, the 123-residue chain is T-complex protein 1 subunit alpha (123 aa).

An ADP-binding site is contributed by Gly68.

It belongs to the TCP-1 chaperonin family. In terms of assembly, component of the chaperonin-containing T-complex (TRiC), a hexadecamer composed of two identical back-to-back stacked rings enclosing a protein folding chamber. Each ring is made up of eight different subunits: TCP1/CCT1, CCT2, CCT3, CCT4, CCT5, CCT6A/CCT6, CCT7, CCT8. Interacts with PACRG. Interacts with GBA1. Interacts with DLEC1.

The protein resides in the cytoplasm. It localises to the cytosol. Its subcellular location is the cytoskeleton. The protein localises to the microtubule organizing center. It is found in the centrosome. It carries out the reaction ATP + H2O = ADP + phosphate + H(+). Its function is as follows. Component of the chaperonin-containing T-complex (TRiC), a molecular chaperone complex that assists the folding of actin, tubulin and other proteins upon ATP hydrolysis. The TRiC complex mediates the folding of WRAP53/TCAB1, thereby regulating telomere maintenance. As part of the TRiC complex may play a role in the assembly of BBSome, a complex involved in ciliogenesis regulating transports vesicles to the cilia. The polypeptide is T-complex protein 1 subunit alpha (Mesocricetus auratus (Golden hamster)).